The chain runs to 303 residues: N-acetyl-D-glucosamine kinase (303 aa).

ATP contacts are provided by residues 4 to 11 (GFDIGGTK) and 133 to 140 (GVGGGLIF). The Zn(2+) site is built by His157, Cys177, Cys179, and Cys184.

This sequence belongs to the ROK (NagC/XylR) family. NagK subfamily.

It catalyses the reaction N-acetyl-D-glucosamine + ATP = N-acetyl-D-glucosamine 6-phosphate + ADP + H(+). It functions in the pathway cell wall biogenesis; peptidoglycan recycling. Its function is as follows. Catalyzes the phosphorylation of N-acetyl-D-glucosamine (GlcNAc) derived from cell-wall degradation, yielding GlcNAc-6-P. This chain is N-acetyl-D-glucosamine kinase, found in Shigella boydii serotype 4 (strain Sb227).